A 303-amino-acid polypeptide reads, in one-letter code: UDP-3-O-acyl-N-acetylglucosamine deacetylase (303 aa).

H78, H237, and D241 together coordinate Zn(2+). H264 (proton donor) is an active-site residue.

The protein belongs to the LpxC family. Requires Zn(2+) as cofactor.

The enzyme catalyses a UDP-3-O-[(3R)-3-hydroxyacyl]-N-acetyl-alpha-D-glucosamine + H2O = a UDP-3-O-[(3R)-3-hydroxyacyl]-alpha-D-glucosamine + acetate. It functions in the pathway glycolipid biosynthesis; lipid IV(A) biosynthesis; lipid IV(A) from (3R)-3-hydroxytetradecanoyl-[acyl-carrier-protein] and UDP-N-acetyl-alpha-D-glucosamine: step 2/6. In terms of biological role, catalyzes the hydrolysis of UDP-3-O-myristoyl-N-acetylglucosamine to form UDP-3-O-myristoylglucosamine and acetate, the committed step in lipid A biosynthesis. The chain is UDP-3-O-acyl-N-acetylglucosamine deacetylase from Azotobacter vinelandii (strain DJ / ATCC BAA-1303).